The sequence spans 426 residues: Probable imidazolonepropionase (426 aa).

2 residues coordinate 4-imidazolone-5-propanoate: Y159 and H192. Residue Y159 coordinates N-formimidoyl-L-glutamate. H260 is a Fe(3+) binding site. Residue H260 participates in Zn(2+) binding. E263 is a 4-imidazolone-5-propanoate binding site. D334 contacts Fe(3+). A Zn(2+)-binding site is contributed by D334. N336 contributes to the N-formimidoyl-L-glutamate binding site.

Belongs to the metallo-dependent hydrolases superfamily. HutI family. Zn(2+) is required as a cofactor. Requires Fe(3+) as cofactor.

The catalysed reaction is 4-imidazolone-5-propanoate + H2O = N-formimidoyl-L-glutamate. It participates in amino-acid degradation; L-histidine degradation into L-glutamate; N-formimidoyl-L-glutamate from L-histidine: step 3/3. This Bos taurus (Bovine) protein is Probable imidazolonepropionase (AMDHD1).